The sequence spans 180 residues: NADH-quinone oxidoreductase subunit I (180 aa).

2 4Fe-4S ferredoxin-type domains span residues 50–80 (LTRDPDGEERCVACNLCAVACPVGCISLQKA) and 90–119 (EFFRINFSRCIFCGLCEEACPTTAIQLTPD). Positions 60, 63, 66, 70, 99, 102, 105, and 109 each coordinate [4Fe-4S] cluster.

The protein belongs to the complex I 23 kDa subunit family. NDH-1 is composed of 13 different subunits. Subunits NuoA, H, J, K, L, M, N constitute the membrane sector of the complex. The cofactor is [4Fe-4S] cluster.

It localises to the cell inner membrane. It carries out the reaction a quinone + NADH + 5 H(+)(in) = a quinol + NAD(+) + 4 H(+)(out). Functionally, NDH-1 shuttles electrons from NADH, via FMN and iron-sulfur (Fe-S) centers, to quinones in the respiratory chain. The immediate electron acceptor for the enzyme in this species is believed to be ubiquinone. Couples the redox reaction to proton translocation (for every two electrons transferred, four hydrogen ions are translocated across the cytoplasmic membrane), and thus conserves the redox energy in a proton gradient. The chain is NADH-quinone oxidoreductase subunit I from Salmonella choleraesuis (strain SC-B67).